Consider the following 380-residue polypeptide: Crotonobetainyl-CoA reductase (380 aa).

This sequence belongs to the acyl-CoA dehydrogenase family. As to quaternary structure, homotetramer. FAD serves as cofactor.

Its subcellular location is the cytoplasm. It carries out the reaction 4-(trimethylamino)butanoyl-CoA + oxidized [electron-transfer flavoprotein] + H(+) = crotonobetainyl-CoA + reduced [electron-transfer flavoprotein]. The protein operates within amine and polyamine metabolism; carnitine metabolism. Catalyzes the reduction of crotonobetainyl-CoA to gamma-butyrobetainyl-CoA. The protein is Crotonobetainyl-CoA reductase of Salmonella typhi.